A 222-amino-acid polypeptide reads, in one-letter code: Voltage-dependent calcium channel gamma-1 subunit (222 aa).

Over 1-10 (MSQTKMLKVR) the chain is Cytoplasmic. The helical transmembrane segment at 11 to 29 (VTLFCILAGIVLAMTAVVT) threads the bilayer. The Extracellular segment spans residues 30–108 (DHWAVLSPHM…TQKEYSISAA (79 aa)). Residues N43 and N79 are each glycosylated (N-linked (GlcNAc...) asparagine). A disulfide bridge links C57 with C80. Residues 109–129 (AIAIFSLGFIILGSLCVLLSL) traverse the membrane as a helical segment. The Cytoplasmic portion of the chain corresponds to 130–134 (GKKRD). A helical membrane pass occupies residues 135-155 (YLLRPASMFYAFAGLCILVSV). The Extracellular portion of the chain corresponds to 156–179 (EVMRQSVKRMIDSEDTVWIEYYYS). A helical transmembrane segment spans residues 180-204 (WSFACACAAFILLFLGGLALLLFSL). The Cytoplasmic portion of the chain corresponds to 205–222 (PRMPRNPWESCMDAEPEH).

Belongs to the PMP-22/EMP/MP20 family. CACNG subfamily. Component of a calcium channel complex consisting of a pore-forming alpha subunit (CACNA1S) and the ancillary subunits CACNB1 or CACNB2, CACNG1 and CACNA2D1. The channel complex contains alpha, beta, gamma and delta subunits in a 1:1:1:1 ratio, i.e. it contains either CACNB1 or CACNB2. Post-translationally, N-glycosylated. In terms of tissue distribution, skeletal muscle.

The protein resides in the cell membrane. Its subcellular location is the sarcolemma. In terms of biological role, regulatory subunit of the voltage-gated calcium channel that gives rise to L-type calcium currents in skeletal muscle. Regulates channel inactivation kinetics. This is Voltage-dependent calcium channel gamma-1 subunit (CACNG1) from Homo sapiens (Human).